A 450-amino-acid polypeptide reads, in one-letter code: WD repeat-containing protein ATCSA-1 (450 aa).

4 WD repeats span residues 41–81 (PHRG…DYEA), 101–141 (GHKY…AVVD), 148–185 (VYRT…FSHT), and 188–228 (GHRD…CFRV). A disordered region spans residues 269–298 (LQSKQTGSQSVKGSSSAKASVEKSRQKRIH). Residues 271-287 (SKQTGSQSVKGSSSAKA) show a composition bias toward low complexity. WD repeat units follow at residues 310–349 (AHYG…NTLV) and 397–436 (GHYE…EDEM).

Interacts with DDB1A. In terms of tissue distribution, expressed in roots, leaves, stems, flowers and siliques.

The protein localises to the nucleus. Its function is as follows. Involved in UV-B tolerance and genome integrity. In association with DDB2, is necessary for repair of UV-B-induced DNA lesions. The sequence is that of WD repeat-containing protein ATCSA-1 from Arabidopsis thaliana (Mouse-ear cress).